Consider the following 358-residue polypeptide: Mannonate dehydratase (358 aa).

This sequence belongs to the mannonate dehydratase family. Fe(2+) is required as a cofactor. Requires Mn(2+) as cofactor.

It carries out the reaction D-mannonate = 2-dehydro-3-deoxy-D-gluconate + H2O. The protein operates within carbohydrate metabolism; pentose and glucuronate interconversion. Catalyzes the dehydration of D-mannonate. The chain is Mannonate dehydratase from Shouchella clausii (strain KSM-K16) (Alkalihalobacillus clausii).